Reading from the N-terminus, the 270-residue chain is Cytochrome c oxidase subunit 3 (270 aa).

The next 7 membrane-spanning stretches (helical) occupy residues 21 to 41 (PWPF…VLYF), 46 to 66 (GSLV…FVWW), 90 to 110 (GIML…WAFF), 131 to 151 (FFSP…SGCA), 167 to 187 (AIFS…FQIY), 205 to 225 (FFMI…FLFV), and 248 to 268 (WYWH…YWWG).

Belongs to the cytochrome c oxidase subunit 3 family. Component of the cytochrome c oxidase (complex IV, CIV), a multisubunit enzyme composed of a catalytic core of 3 subunits and several supernumerary subunits. The complex exists as a monomer or a dimer and forms supercomplexes (SCs) in the inner mitochondrial membrane with ubiquinol-cytochrome c oxidoreductase (cytochrome b-c1 complex, complex III, CIII).

The protein localises to the mitochondrion inner membrane. It catalyses the reaction 4 Fe(II)-[cytochrome c] + O2 + 8 H(+)(in) = 4 Fe(III)-[cytochrome c] + 2 H2O + 4 H(+)(out). Functionally, component of the cytochrome c oxidase, the last enzyme in the mitochondrial electron transport chain which drives oxidative phosphorylation. The respiratory chain contains 3 multisubunit complexes succinate dehydrogenase (complex II, CII), ubiquinol-cytochrome c oxidoreductase (cytochrome b-c1 complex, complex III, CIII) and cytochrome c oxidase (complex IV, CIV), that cooperate to transfer electrons derived from NADH and succinate to molecular oxygen, creating an electrochemical gradient over the inner membrane that drives transmembrane transport and the ATP synthase. Cytochrome c oxidase is the component of the respiratory chain that catalyzes the reduction of oxygen to water. Electrons originating from reduced cytochrome c in the intermembrane space (IMS) are transferred via the dinuclear copper A center (CU(A)) of subunit 2 and heme A of subunit 1 to the active site in subunit 1, a binuclear center (BNC) formed by heme A3 and copper B (CU(B)). The BNC reduces molecular oxygen to 2 water molecules using 4 electrons from cytochrome c in the IMS and 4 protons from the mitochondrial matrix. The chain is Cytochrome c oxidase subunit 3 (COX3) from Cyanidium caldarium (Red alga).